Here is a 189-residue protein sequence, read N- to C-terminus: Thymidine kinase (189 aa).

ATP contacts are provided by residues 9-16 and 85-88; these read GTMNSGKT and DESQ. The Proton acceptor role is filled by Glu-86. Zn(2+)-binding residues include Cys-143, Cys-146, Cys-180, and His-183.

It belongs to the thymidine kinase family. Homotetramer.

The protein resides in the cytoplasm. It carries out the reaction thymidine + ATP = dTMP + ADP + H(+). This Streptococcus pyogenes serotype M6 (strain ATCC BAA-946 / MGAS10394) protein is Thymidine kinase.